The sequence spans 188 residues: Elongation factor P (188 aa).

Position 34 is an N6-(3,6-diaminohexanoyl)-5-hydroxylysine (lysine 34).

Belongs to the elongation factor P family. Post-translationally, may be beta-lysylated on the epsilon-amino group of Lys-34 by the combined action of EpmA and EpmB, and then hydroxylated on the C5 position of the same residue by EpmC (if this protein is present). Lysylation is critical for the stimulatory effect of EF-P on peptide-bond formation. The lysylation moiety may extend toward the peptidyltransferase center and stabilize the terminal 3-CCA end of the tRNA. Hydroxylation of the C5 position on Lys-34 may allow additional potential stabilizing hydrogen-bond interactions with the P-tRNA.

It is found in the cytoplasm. The protein operates within protein biosynthesis; polypeptide chain elongation. Functionally, involved in peptide bond synthesis. Alleviates ribosome stalling that occurs when 3 or more consecutive Pro residues or the sequence PPG is present in a protein, possibly by augmenting the peptidyl transferase activity of the ribosome. Modification of Lys-34 is required for alleviation. This Methylococcus capsulatus (strain ATCC 33009 / NCIMB 11132 / Bath) protein is Elongation factor P.